A 327-amino-acid chain; its full sequence is GMP reductase (327 aa).

The active-site Thioimidate intermediate is C176. Residue 205 to 228 participates in NADP(+) binding; the sequence is IIADGGIRTHGDIAKSIRFGASMV.

This sequence belongs to the IMPDH/GMPR family. GuaC type 2 subfamily.

It carries out the reaction IMP + NH4(+) + NADP(+) = GMP + NADPH + 2 H(+). Catalyzes the irreversible NADPH-dependent deamination of GMP to IMP. It functions in the conversion of nucleobase, nucleoside and nucleotide derivatives of G to A nucleotides, and in maintaining the intracellular balance of A and G nucleotides. This chain is GMP reductase, found in Streptococcus agalactiae serotype V (strain ATCC BAA-611 / 2603 V/R).